The chain runs to 186 residues: Two-component response regulator ARR6 (186 aa).

One can recognise a Response regulatory domain in the interval 26–153; the sequence is HVLAVDDSHV…DVKRLRDSLM (128 aa). A 4-aspartylphosphate modification is found at Asp86.

It belongs to the ARR family. Type-A subfamily. In terms of processing, two-component system major event consists of a His-to-Asp phosphorelay between a sensor histidine kinase (HK) and a response regulator (RR). In plants, the His-to-Asp phosphorelay involves an additional intermediate named Histidine-containing phosphotransfer protein (HPt). This multistep phosphorelay consists of a His-Asp-His-Asp sequential transfer of a phosphate group between first a His and an Asp of the HK protein, followed by the transfer to a conserved His of the HPt protein and finally the transfer to an Asp in the receiver domain of the RR protein. In terms of tissue distribution, predominantly expressed in roots.

It is found in the nucleus. Functionally, functions as a response regulator involved in His-to-Asp phosphorelay signal transduction system. Phosphorylation of the Asp residue in the receiver domain activates the ability of the protein to promote the transcription of target genes. Type-A response regulators seem to act as negative regulators of the cytokinin signaling. The sequence is that of Two-component response regulator ARR6 (ARR6) from Arabidopsis thaliana (Mouse-ear cress).